The following is a 270-amino-acid chain: MSGQQSSAVYKIALGIEYDGSKYYGWQRQNEVRSVQEKLEKALSQVANEPINVFCAGRTDAGVHGTGQVVHFETTALRKDAAWTLGVNANLPGDIAVRWVKTVPDDFHARFSATARRYRYIIYNHRLRPAVLAKGVTHYYEPLDAERMHRAAQCLLGENDFTSFRAVQCQSRTPWRNVMHINVTRHGPYVVVDIKANAFVHHMVRNIVGSLLEVGAHNQPESWIAELLAARDRTLAAATAKAEGLYLVAVDYPDRFDLPKPPMGPLFLAD.

Catalysis depends on aspartate 60, which acts as the Nucleophile. Tyrosine 118 contributes to the substrate binding site.

This sequence belongs to the tRNA pseudouridine synthase TruA family. In terms of assembly, homodimer.

The enzyme catalyses uridine(38/39/40) in tRNA = pseudouridine(38/39/40) in tRNA. Its function is as follows. Formation of pseudouridine at positions 38, 39 and 40 in the anticodon stem and loop of transfer RNAs. In Salmonella typhimurium (strain LT2 / SGSC1412 / ATCC 700720), this protein is tRNA pseudouridine synthase A.